The primary structure comprises 590 residues: Protein phosphatase PP2A regulatory subunit A (590 aa).

11 HEAT repeats span residues Pro-12–Glu-50, Leu-89–Tyr-127, Phe-206–His-244, Leu-246–Glu-284, Leu-285–Glu-323, Ile-324–Tyr-362, Leu-363–Ser-401, Leu-402–Lys-440, Ile-480–Gln-518, Ile-519–Ala-551, and Ile-562–Asp-590.

This sequence belongs to the phosphatase 2A regulatory subunit A family. In terms of assembly, PP2A exists in several trimeric forms, all of which consist of a core composed of a catalytic subunit associated with a 65 kDa (PR65) (Subunit A) and a 55 kDa (PR55) (Subunit B) regulatory subunit.

Phosphatase 2A affects a variety of biological processes in the cell such as transcription, cell cycle progression and cellular morphogenesis, and provides an initial identification of critical substrates for this phosphatase. The regulatory subunit may direct the catalytic subunit to distinct, albeit overlapping, subsets of substrates. This Schizosaccharomyces pombe (strain 972 / ATCC 24843) (Fission yeast) protein is Protein phosphatase PP2A regulatory subunit A (paa1).